Here is a 1982-residue protein sequence, read N- to C-terminus: CASP8-associated protein 2 (1982 aa).

Position 2 is an N-acetylalanine (Ala-2). Ser-20 carries the post-translational modification Phosphoserine. Over residues 159–191 (VKTKDLKSRSPHLDDCSKTDHRAKSDVSKDVHH) the composition is skewed to basic and acidic residues. The tract at residues 159–552 (VKTKDLKSRS…ESGPNETKNK (394 aa)) is disordered. Position 194 is a phosphoserine (Ser-194). Basic and acidic residues predominate over residues 198–210 (LEKEGKPHSDKRS). Residues 225–240 (GVWSRSHYQVGEGSSN) show a composition bias toward polar residues. Residues 286–395 (GHPEKYGKGE…ERASLPHSKN (110 aa)) are compositionally biased toward basic and acidic residues. Residues 396–405 (EITFSHNSSK) show a composition bias toward polar residues. Composition is skewed to basic and acidic residues over residues 406–423 (YHLE…DKSV), 444–455 (KNIDSKEVDAMH), and 463–524 (KAER…KGEV). Ser-567 carries the post-translational modification Phosphoserine. A disordered region spans residues 569 to 593 (AKKQPVSQDNQHKITDIPKSSGVCD). A phosphoserine mark is found at Ser-658, Ser-815, and Ser-875. Disordered stretches follow at residues 875–1017 (SPPQ…DKVM), 1157–1188 (FGRD…DNSN), and 1251–1283 (ERSL…HATL). Residues 894-904 (SAHSTSKSQSD) show a composition bias toward polar residues. Composition is skewed to basic and acidic residues over residues 905–924 (LNKE…EADT), 936–965 (GEIR…DVRK), 999–1016 (KRPD…KDKV), and 1157–1170 (FGRD…EKTS). The residue at position 940 (Ser-940) is a Phosphoserine. Ser-1161 is subject to Phosphoserine. 2 stretches are compositionally biased toward polar residues: residues 1171–1181 (KQNAQYSNSQK) and 1269–1281 (GSSI…SQHA). Position 1343 is an N6-acetyllysine (Lys-1343). Positions 1683–1687 (YVDLT) match the SUMO interaction motif 1 (SIM); mediates the binding to polysumoylated substrates motif. The NCOA2-binding stretch occupies residues 1709 to 1982 (DQLGCSGGNL…MKLFEKSKCR (274 aa)). An SUMO interaction motif 2 (SIM); mediates the binding to polysumoylated substrates motif is present at residues 1737–1741 (FIDLT). An SUMO interaction motif 3 (SIM); mediates the binding to polysumoylated substrates motif is present at residues 1794–1798 (YIDLT). A disordered region spans residues 1803-1909 (SSCEVKKDEL…IKDSSAALAT (107 aa)). Positions 1851–1865 (KETDLTNKEKTKKPT) are enriched in basic and acidic residues.

Self-associates. Component of the death-inducing signaling complex (DISC) with CASP8, FADD and FAS. Interacts with NCOA2 and NCOA3. Interacts with SRRT. Interacts with TRAF2. Interacts with NPAT. Interacts (via SIM domains) with SUMO1 and SUMO2. Interacts with SP100; may negatively regulate CASP8AP2 export from the nucleus to the cytoplasm.

It localises to the cytoplasm. The protein resides in the nucleus. Its subcellular location is the PML body. The protein localises to the mitochondrion. In terms of biological role, participates in TNF-alpha-induced blockade of glucocorticoid receptor (GR) transactivation at the nuclear receptor coactivator level, upstream and independently of NF-kappa-B. Suppresses both NCOA2- and NCOA3-induced enhancement of GR transactivation. Involved in TNF-alpha-induced activation of NF-kappa-B via a TRAF2-dependent pathway. Acts as a downstream mediator for CASP8-induced activation of NF-kappa-B. Required for the activation of CASP8 in FAS-mediated apoptosis. Required for histone gene transcription and progression through S phase. The protein is CASP8-associated protein 2 of Homo sapiens (Human).